We begin with the raw amino-acid sequence, 274 residues long: NADPH-dependent 7-cyano-7-deazaguanine reductase (274 aa).

81–83 (IES) is a binding site for substrate. NADPH is bound at residue 83–84 (SK). Catalysis depends on C182, which acts as the Thioimide intermediate. Residue D189 is the Proton donor of the active site. Substrate is bound at residue 221–222 (HE). 250 to 251 (RG) lines the NADPH pocket.

Belongs to the GTP cyclohydrolase I family. QueF type 2 subfamily. As to quaternary structure, homodimer.

The protein localises to the cytoplasm. The catalysed reaction is 7-aminomethyl-7-carbaguanine + 2 NADP(+) = 7-cyano-7-deazaguanine + 2 NADPH + 3 H(+). The protein operates within tRNA modification; tRNA-queuosine biosynthesis. Catalyzes the NADPH-dependent reduction of 7-cyano-7-deazaguanine (preQ0) to 7-aminomethyl-7-deazaguanine (preQ1). The protein is NADPH-dependent 7-cyano-7-deazaguanine reductase of Hahella chejuensis (strain KCTC 2396).